Reading from the N-terminus, the 275-residue chain is T cell receptor alpha chain MC.7.G5 (275 aa).

An N-terminal signal peptide occupies residues 1 to 21; sequence MACPGFLWALVISTCLEFSMA. The Ig-like V-type domain maps to 22–116; sequence QTVTQSQPEM…AAMYFCAYRS (95 aa). A t cell receptor alpha variable 38-2DV8 region spans residues 22–116; it reads QTVTQSQPEM…AAMYFCAYRS (95 aa). A disulfide bridge links Cys-43 with Cys-112. Residues 47 to 53 form a CDR1 region; the sequence is TSESDYY. Positions 71 to 81 are CDR2; it reads QEAYKQQNATE. N-linked (GlcNAc...) asparagine glycosylation is present at Asn-78. Residues 112–124 are CDR3; the sequence is CAYRSAVNARLMF. The segment at 119–134 is t cell receptor alpha joining 31; the sequence is NARLMFGDGTQLVVKP. Residues 136–275 are t cell receptor alpha constant; that stretch reads IQNPDPAVYQ…LLMTLRLWSS (140 aa). In terms of domain architecture, Ig-like C1-type spans 154–242; the sequence is KSVCLFTDFD…LVEKSFETDT (89 aa). The cysteines at positions 157 and 207 are disulfide-linked. Residues Asn-167, Asn-201, Asn-212, and Asn-248 are each glycosylated (N-linked (GlcNAc...) asparagine). The segment at 229-250 is connecting peptide; sequence CDVKLVEKSFETDTNLNFQNLS. A helical transmembrane segment spans residues 251 to 273; that stretch reads VIGFRILLLKVAGFNLLMTLRLW. Topologically, residues 274–275 are cytoplasmic; sequence SS.

As to quaternary structure, disulfide-linked heterodimer with TRBV25-1*01J2S3*01C2*01 beta chain. The alpha-beta TR associates with the transmembrane signaling CD3 coreceptor proteins to form the TR-CD3 (TCR). The assembly of alpha-beta TR heterodimers with CD3 occurs in the endoplasmic reticulum where a single alpha-beta TR heterodimer associates with one CD3D-CD3E heterodimer, one CD3G-CD3E heterodimer and one CD247 homodimer forming a stable octameric structure. CD3D-CD3E and CD3G-CD3E heterodimers preferentially associate with TR alpha and TR beta chains (via TM domain), respectively. The association of the CD247 homodimer is the last step of TCR assembly in the endoplasmic reticulum and is required for transport to the cell surface. Expressed in MR1-restricted CD8-positive T cells.

Its subcellular location is the cell membrane. The alpha chain of TRAV38-2DV8*01J31*01C*01/TRBV25-1*01J2S3*01C2*01 alpha-beta T cell receptor (TR) clonotype that displays pan-cancer cell recognition via the invariant MR1 molecule. On CD8-positive T cell clone MC.7.G5, likely recognizes tumor-specific or -associated metabolite(s) essential for cancer cell survival, triggering killing of many cancer cell types including lung, melanoma, leukemia, colon, breast, prostate, bone and ovarian cancer cells. Mediates cancer cell cytotoxicity in an HLA-independent manner. Has no reactivity to healthy cells, even stressed or infected by bacteria. Antigen recognition initiates TR-CD3 clustering on the cell surface and intracellular activation of LCK that phosphorylates the ITAM motifs of CD3G, CD3D, CD3E and CD247 enabling the recruitment of ZAP70. In turn, ZAP70 phosphorylates LAT, which recruits numerous signaling molecules to form the LAT signalosome. The LAT signalosome propagates signal branching to three major signaling pathways, the calcium, the mitogen-activated protein kinase (MAPK) kinase and the nuclear factor NF-kappa-B (NF-kB) pathways, leading to the mobilization of transcription factors that are critical for gene expression and essential for T cell differentiation into effector/memory T cells. This Homo sapiens (Human) protein is T cell receptor alpha chain MC.7.G5.